A 314-amino-acid chain; its full sequence is Olfactory receptor 5D13 (314 aa).

The Extracellular segment spans residues methionine 1–valine 27. N-linked (GlcNAc...) asparagine glycosylation is present at asparagine 7. The helical transmembrane segment at proline 28 to isoleucine 48 threads the bilayer. Residues isoleucine 49–lysine 56 are Cytoplasmic-facing. Residues leucine 57–threonine 77 traverse the membrane as a helical segment. The Extracellular portion of the chain corresponds to valine 78–methionine 101. The chain crosses the membrane as a helical span at residues glutamine 102–tyrosine 122. Residues aspartate 123–lysine 141 are Cytoplasmic-facing. A helical membrane pass occupies residues leucine 142–threonine 162. The Extracellular segment spans residues tyrosine 163–glutamine 198. Residues arginine 199–serine 219 traverse the membrane as a helical segment. Residues tyrosine 220–threonine 239 lie on the Cytoplasmic side of the membrane. The chain crosses the membrane as a helical span at residues phenylalanine 240–leucine 260. The Extracellular portion of the chain corresponds to tyrosine 261–valine 273. A helical transmembrane segment spans residues threonine 274 to leucine 294. The Cytoplasmic portion of the chain corresponds to arginine 295–histidine 314.

The protein belongs to the G-protein coupled receptor 1 family.

The protein localises to the cell membrane. In terms of biological role, odorant receptor. This chain is Olfactory receptor 5D13 (OR5D13), found in Homo sapiens (Human).